The following is a 231-amino-acid chain: Orotate phosphoribosyltransferase (231 aa).

Residues Lys-27, 79-80, Arg-106, Lys-107, Lys-110, His-112, and 133-141 contribute to the 5-phospho-alpha-D-ribose 1-diphosphate site; these read YK and DDVMTAGTA. Thr-137 and Arg-166 together coordinate orotate.

This sequence belongs to the purine/pyrimidine phosphoribosyltransferase family. PyrE subfamily. Homodimer. It depends on Mg(2+) as a cofactor.

The enzyme catalyses orotidine 5'-phosphate + diphosphate = orotate + 5-phospho-alpha-D-ribose 1-diphosphate. Its pathway is pyrimidine metabolism; UMP biosynthesis via de novo pathway; UMP from orotate: step 1/2. Functionally, catalyzes the transfer of a ribosyl phosphate group from 5-phosphoribose 1-diphosphate to orotate, leading to the formation of orotidine monophosphate (OMP). In Bifidobacterium longum (strain DJO10A), this protein is Orotate phosphoribosyltransferase.